The sequence spans 215 residues: 7-methyl-GTP pyrophosphatase (215 aa).

Asp-79 (proton acceptor) is an active-site residue.

The protein belongs to the Maf family. YceF subfamily. A divalent metal cation serves as cofactor.

It localises to the cytoplasm. It catalyses the reaction N(7)-methyl-GTP + H2O = N(7)-methyl-GMP + diphosphate + H(+). In terms of biological role, nucleoside triphosphate pyrophosphatase that hydrolyzes 7-methyl-GTP (m(7)GTP). May have a dual role in cell division arrest and in preventing the incorporation of modified nucleotides into cellular nucleic acids. This Burkholderia thailandensis (strain ATCC 700388 / DSM 13276 / CCUG 48851 / CIP 106301 / E264) protein is 7-methyl-GTP pyrophosphatase.